The sequence spans 428 residues: Divergent protein kinase domain 1A (428 aa).

Topologically, residues 1–27 (MARSLCPGAWLRKPYYLQARFSYVRMK) are cytoplasmic. Residues 28–48 (YLFFSWLVVFVGSWIIYVQYS) traverse the membrane as a helical segment. At 49–428 (TYTELCRGKD…WKKISYTNDS (380 aa)) the chain is on the lumenal side.

This sequence belongs to the DIPK family. Among the many cysteines in the lumenal domain, most are probably involved in disulfide bonds.

The protein resides in the endoplasmic reticulum membrane. In Homo sapiens (Human), this protein is Divergent protein kinase domain 1A.